Reading from the N-terminus, the 202-residue chain is Josephin-1 (202 aa).

Serine 15 carries the phosphoserine modification. A Josephin domain is found at 23–202 (PPQIYHEKQR…EAHQSWRTDV (180 aa)). Residue cysteine 36 is the Nucleophile of the active site. Histidine 139 functions as the Proton acceptor in the catalytic mechanism.

Interacts with beta-actin/ACTB. In terms of processing, monoubiquitinated. Ubiquitination activates deubiquitination activity in vitro.

Its subcellular location is the cell membrane. The protein localises to the cytoplasm. The enzyme catalyses Thiol-dependent hydrolysis of ester, thioester, amide, peptide and isopeptide bonds formed by the C-terminal Gly of ubiquitin (a 76-residue protein attached to proteins as an intracellular targeting signal).. Deubiquitinates monoubiquitinated probes (in vitro). When ubiquitinated, cleaves 'Lys-63'-linked and 'Lys-48'-linked poly-ubiquitin chains (in vitro), hence may act as a deubiquitinating enzyme. May increase macropinocytosis and suppress clathrin- and caveolae-mediated endocytosis. May enhance membrane dynamics and cell motility independently of its catalytic activity. The protein is Josephin-1 (JOSD1) of Pongo abelii (Sumatran orangutan).